The sequence spans 1641 residues: Helicase SWR1 (1641 aa).

Disordered stretches follow at residues 1–54 (MPEN…STQS) and 184–230 (SQEK…EDQD). Polar residues-rich tracts occupy residues 12-44 (ARLT…STAS) and 184-214 (SQEK…TTPK). The segment covering 215–226 (RGNENGSRKQAL) has biased composition (basic and acidic residues). Residues 416–488 (KPKLHGAANN…REQNLKKMSR (73 aa)) enclose the HSA domain. A coiled-coil region spans residues 461 to 521 (IDQHFKKKKG…KEEELKKIKG (61 aa)). Disordered stretches follow at residues 537 to 669 (EAQL…EVAD) and 686 to 782 (EDLN…RELE). A compositionally biased stretch (low complexity) spans 555–571 (NSTTFDDNTNDSDNFSS). Acidic residues predominate over residues 572–581 (SEEEENEEDN). Positions 590-600 (KKYDVNGKSND) are enriched in basic and acidic residues. Acidic residues predominate over residues 639 to 652 (TSSEDAESSDDDDT). Residues 701–711 (DSDSVSSISDS) show a composition bias toward low complexity. Acidic residues predominate over residues 712-723 (ESSEESSSDTEM). Polar residues predominate over residues 727-752 (NVSEPPRSSETGSNTGLASLFTNGTI). Residues 835-1000 (ASLYNNNTNG…WSLLYFLMPS (166 aa)) form the Helicase ATP-binding domain. 848–855 (DEMGLGKT) provides a ligand contact to ATP. The short motif at 951 to 954 (DEAH) is the DEAH box element. The 154-residue stretch at 1367–1520 (KLQKLATLLQ…NVVIQEGEFT (154 aa)) folds into the Helicase C-terminal domain. The disordered stretch occupies residues 1586-1607 (KEETRSATTGATPAPTETNALS). Over residues 1591-1605 (SATTGATPAPTETNA) the composition is skewed to low complexity.

It belongs to the SNF2/RAD54 helicase family. SWR1 subfamily. As to quaternary structure, component of the SWR1 chromatin-remodeling complex.

It is found in the nucleus. It carries out the reaction ATP + H2O = ADP + phosphate + H(+). Functionally, catalytic component of the SWR1 complex which mediates the ATP-dependent exchange of histone H2A for the H2A variant HZT1 leading to transcriptional regulation of selected genes by chromatin remodeling. The sequence is that of Helicase SWR1 (SWR1) from Candida albicans (strain SC5314 / ATCC MYA-2876) (Yeast).